The chain runs to 535 residues: Glutamyl-tRNA reductase 3, chloroplastic (535 aa).

Cys-131 (nucleophile) is an active-site residue. Substrate contacts are provided by residues 131–133, Ser-190, 195–197, and Gln-201; these read CNR and EGQ. 272 to 277 contributes to the NADP(+) binding site; it reads GAGKMG.

The protein belongs to the glutamyl-tRNA reductase family. In terms of tissue distribution, primarily expressed in roots.

The protein resides in the plastid. The protein localises to the chloroplast. The catalysed reaction is (S)-4-amino-5-oxopentanoate + tRNA(Glu) + NADP(+) = L-glutamyl-tRNA(Glu) + NADPH + H(+). It participates in porphyrin-containing compound metabolism; protoporphyrin-IX biosynthesis; 5-aminolevulinate from L-glutamyl-tRNA(Glu): step 1/2. In terms of biological role, catalyzes the NADPH-dependent reduction of glutamyl-tRNA(Glu) to glutamate 1-semialdehyde (GSA). This chain is Glutamyl-tRNA reductase 3, chloroplastic (HEMA3), found in Hordeum vulgare (Barley).